We begin with the raw amino-acid sequence, 255 residues long: Malonyl-[acyl-carrier protein] O-methyltransferase (255 aa).

Belongs to the methyltransferase superfamily.

The catalysed reaction is malonyl-[ACP] + S-adenosyl-L-methionine = malonyl-[ACP] methyl ester + S-adenosyl-L-homocysteine. It participates in cofactor biosynthesis; biotin biosynthesis. Functionally, converts the free carboxyl group of a malonyl-thioester to its methyl ester by transfer of a methyl group from S-adenosyl-L-methionine (SAM). It allows to synthesize pimeloyl-ACP via the fatty acid synthetic pathway. The polypeptide is Malonyl-[acyl-carrier protein] O-methyltransferase (Acinetobacter baylyi (strain ATCC 33305 / BD413 / ADP1)).